Reading from the N-terminus, the 205-residue chain is Ras-like protein 3 (205 aa).

16–23 provides a ligand contact to GTP; it reads GGGGVGKS. The Effector region motif lies at 38–46; that stretch reads YDPTIEDSY. GTP contacts are provided by residues 63–67 and 122–125; these read DTAGQ and NKCD. Cys-202 is subject to Cysteine methyl ester. Cys-202 is lipidated: S-farnesyl cysteine. Positions 203–205 are cleaved as a propeptide — removed in mature form; the sequence is ILM.

The protein belongs to the small GTPase superfamily. Ras family.

It is found in the cell membrane. It catalyses the reaction GTP + H2O = GDP + phosphate + H(+). With respect to regulation, alternates between an inactive form bound to GDP and an active form bound to GTP. Activated by a guanine nucleotide-exchange factor (GEF) and inactivated by a GTPase-activating protein (GAP). The protein is Ras-like protein 3 (RAS3) of Mucor circinelloides f. lusitanicus (Mucor racemosus var. lusitanicus).